We begin with the raw amino-acid sequence, 365 residues long: Aminomethyltransferase (365 aa).

Belongs to the GcvT family. The glycine cleavage system is composed of four proteins: P, T, L and H.

It catalyses the reaction N(6)-[(R)-S(8)-aminomethyldihydrolipoyl]-L-lysyl-[protein] + (6S)-5,6,7,8-tetrahydrofolate = N(6)-[(R)-dihydrolipoyl]-L-lysyl-[protein] + (6R)-5,10-methylene-5,6,7,8-tetrahydrofolate + NH4(+). The glycine cleavage system catalyzes the degradation of glycine. The chain is Aminomethyltransferase from Cronobacter sakazakii (strain ATCC BAA-894) (Enterobacter sakazakii).